A 407-amino-acid polypeptide reads, in one-letter code: Chorismate synthase (407 aa).

NADP(+) is bound by residues Arg-40 and Arg-46. FMN contacts are provided by residues 135 to 137, 256 to 257, Gly-300, 315 to 319, and Arg-341; these read RAS, QA, and KPIST.

Belongs to the chorismate synthase family. In terms of assembly, homotetramer. The cofactor is FMNH2.

It catalyses the reaction 5-O-(1-carboxyvinyl)-3-phosphoshikimate = chorismate + phosphate. It participates in metabolic intermediate biosynthesis; chorismate biosynthesis; chorismate from D-erythrose 4-phosphate and phosphoenolpyruvate: step 7/7. Catalyzes the anti-1,4-elimination of the C-3 phosphate and the C-6 proR hydrogen from 5-enolpyruvylshikimate-3-phosphate (EPSP) to yield chorismate, which is the branch point compound that serves as the starting substrate for the three terminal pathways of aromatic amino acid biosynthesis. This reaction introduces a second double bond into the aromatic ring system. The chain is Chorismate synthase from Mycobacterium leprae (strain Br4923).